The following is a 100-amino-acid chain: Large ribosomal subunit protein bL28 (100 aa).

Belongs to the bacterial ribosomal protein bL28 family.

This chain is Large ribosomal subunit protein bL28, found in Ehrlichia ruminantium (strain Gardel).